The chain runs to 103 residues: N(4)-acetylcytidine amidohydrolase (103 aa).

The ASCH domain occupies 6–92; that stretch reads TFFERFEQDI…VIQEIYPGLE (87 aa). K20 (proton acceptor) is an active-site residue. The active-site Nucleophile is T23. E73 functions as the Proton donor in the catalytic mechanism.

The protein belongs to the N(4)-acetylcytidine amidohydrolase family.

The enzyme catalyses N(4)-acetylcytidine + H2O = cytidine + acetate + H(+). It catalyses the reaction N(4)-acetyl-2'-deoxycytidine + H2O = 2'-deoxycytidine + acetate + H(+). It carries out the reaction N(4)-acetylcytosine + H2O = cytosine + acetate + H(+). Functionally, catalyzes the hydrolysis of N(4)-acetylcytidine (ac4C). In Shewanella sp. (strain MR-4), this protein is N(4)-acetylcytidine amidohydrolase.